The primary structure comprises 358 residues: Molybdenum import ATP-binding protein ModC (358 aa).

The 226-residue stretch at 3–228 (INVKQKLGDL…LEMRPWLPAK (226 aa)) folds into the ABC transporter domain. 30 to 37 (GRSGAGKT) contacts ATP. The Mop domain maps to 289–356 (QTSIRNVLLA…IKGVSVTKDD (68 aa)).

This sequence belongs to the ABC transporter superfamily. Molybdate importer (TC 3.A.1.8) family. As to quaternary structure, the complex is composed of two ATP-binding proteins (ModC), two transmembrane proteins (ModB) and a solute-binding protein (ModA).

Its subcellular location is the cell inner membrane. It catalyses the reaction molybdate(out) + ATP + H2O = molybdate(in) + ADP + phosphate + H(+). In terms of biological role, part of the ABC transporter complex ModABC involved in molybdenum import. Responsible for energy coupling to the transport system. This Photobacterium profundum (strain SS9) protein is Molybdenum import ATP-binding protein ModC.